Reading from the N-terminus, the 447-residue chain is N-succinylarginine dihydrolase (447 aa).

Substrate contacts are provided by residues 19-28 (GGLAVGNIAS), Asn110, and 137-138 (HR). Glu174 is an active-site residue. Arg213 provides a ligand contact to substrate. His249 is an active-site residue. The substrate site is built by Asp251 and Asn362. Residue Cys368 is the Nucleophile of the active site.

The protein belongs to the succinylarginine dihydrolase family. As to quaternary structure, homodimer.

The enzyme catalyses N(2)-succinyl-L-arginine + 2 H2O + 2 H(+) = N(2)-succinyl-L-ornithine + 2 NH4(+) + CO2. It participates in amino-acid degradation; L-arginine degradation via AST pathway; L-glutamate and succinate from L-arginine: step 2/5. Functionally, catalyzes the hydrolysis of N(2)-succinylarginine into N(2)-succinylornithine, ammonia and CO(2). The sequence is that of N-succinylarginine dihydrolase from Nitrosospira multiformis (strain ATCC 25196 / NCIMB 11849 / C 71).